A 331-amino-acid chain; its full sequence is L-lactate dehydrogenase A chain (331 aa).

NAD(+)-binding positions include 29 to 57 (GMVGMASAISILLKDLCDELAMVDVMEDK) and arginine 98. 3 residues coordinate substrate: arginine 105, asparagine 137, and arginine 168. Residue asparagine 137 coordinates NAD(+). Histidine 192 acts as the Proton acceptor in catalysis. Position 247 (threonine 247) interacts with substrate.

This sequence belongs to the LDH/MDH superfamily. LDH family. In terms of assembly, homotetramer.

It localises to the cytoplasm. The catalysed reaction is (S)-lactate + NAD(+) = pyruvate + NADH + H(+). The protein operates within fermentation; pyruvate fermentation to lactate; (S)-lactate from pyruvate: step 1/1. Its function is as follows. Interconverts simultaneously and stereospecifically pyruvate and lactate with concomitant interconversion of NADH and NAD(+). This is L-lactate dehydrogenase A chain (ldha) from Gobionotothen gibberifrons (Humped rockcod).